The sequence spans 617 residues: KIF-binding protein (617 aa).

A disordered region spans residues Ala-48–Gly-83. The residue at position 174 (Ser-174) is a Phosphoserine.

Belongs to the KIF-binding protein family. As to quaternary structure, interacts with KIF1B; positively regulates KIF1B microtubule motor activity. Interacts with STMN2.

Its subcellular location is the cytoplasm. The protein localises to the cytoskeleton. Functionally, activator of KIF1B plus-end-directed microtubule motor activity. Required for organization of axonal microtubules, and axonal outgrowth and maintenance during peripheral and central nervous system development. The polypeptide is KIF-binding protein (Kifbp) (Rattus norvegicus (Rat)).